We begin with the raw amino-acid sequence, 125 residues long: Large ribosomal subunit protein bL12 (125 aa).

It belongs to the bacterial ribosomal protein bL12 family. As to quaternary structure, homodimer. Part of the ribosomal stalk of the 50S ribosomal subunit. Forms a multimeric L10(L12)X complex, where L10 forms an elongated spine to which 2 to 4 L12 dimers bind in a sequential fashion. Binds GTP-bound translation factors.

In terms of biological role, forms part of the ribosomal stalk which helps the ribosome interact with GTP-bound translation factors. Is thus essential for accurate translation. The polypeptide is Large ribosomal subunit protein bL12 (Delftia acidovorans (strain DSM 14801 / SPH-1)).